A 174-amino-acid chain; its full sequence is MELVIGRVVKAHGITGEVVVEIRTDEPDRRFTPGASLRAKRSRDGGTGRNYVIEGVREHGARLLVRLAGVNDRDTADGLRGSLFVIDSADLPPIEEPDTYYDHQLEGLRVRTTAGQDVGVVAEVLHTGAGELLAVKCDSGEVLVPFVGAIVTSVSLDDRILEIDPPDGLLDLGS.

The 73-residue stretch at 97–169 (PDTYYDHQLE…ILEIDPPDGL (73 aa)) folds into the PRC barrel domain.

This sequence belongs to the RimM family. Binds ribosomal protein uS19.

The protein resides in the cytoplasm. Functionally, an accessory protein needed during the final step in the assembly of 30S ribosomal subunit, possibly for assembly of the head region. Essential for efficient processing of 16S rRNA. May be needed both before and after RbfA during the maturation of 16S rRNA. It has affinity for free ribosomal 30S subunits but not for 70S ribosomes. This Mycobacterium ulcerans (strain Agy99) protein is Ribosome maturation factor RimM.